Here is a 134-residue protein sequence, read N- to C-terminus: ATP synthase epsilon chain (134 aa).

Belongs to the ATPase epsilon chain family. F-type ATPases have 2 components, CF(1) - the catalytic core - and CF(0) - the membrane proton channel. CF(1) has five subunits: alpha(3), beta(3), gamma(1), delta(1), epsilon(1). CF(0) has three main subunits: a, b and c.

It localises to the cellular thylakoid membrane. In terms of biological role, produces ATP from ADP in the presence of a proton gradient across the membrane. This Prochlorococcus marinus (strain AS9601) protein is ATP synthase epsilon chain.